A 201-amino-acid polypeptide reads, in one-letter code: Probable phosphopantothenoylcysteine decarboxylase (201 aa).

Residues Gly-20–Val-22, Ser-45–Ser-47, Ser-98–Thr-101, and Ala-132 contribute to the FMN site. Residues Asn-134 and Lys-164 to Ala-166 contribute to the substrate site. Catalysis depends on Cys-167, which acts as the Proton donor. Met-175 serves as a coordination point for substrate.

This sequence belongs to the HFCD (homooligomeric flavin containing Cys decarboxylase) superfamily. In terms of assembly, homotrimer. The cofactor is FMN. As to expression, expressed in roots, shoots, leaves, flowers, developing siliques and seeds.

The catalysed reaction is N-[(R)-4-phosphopantothenoyl]-L-cysteine + H(+) = (R)-4'-phosphopantetheine + CO2. The protein operates within cofactor biosynthesis; coenzyme A biosynthesis; CoA from (R)-pantothenate: step 3/5. Involved in plant growth and salt and osmotic tolerance. Catalyzes the decarboxylation of 4'-phosphopantothenoylcysteine to 4'-phosphopantetheine, a key step in coenzyme A biosynthesis. The enzyme is also able to decarboxylate pantothenoylcysteine to pantothenoylcysteamine. This Arabidopsis thaliana (Mouse-ear cress) protein is Probable phosphopantothenoylcysteine decarboxylase (HAL3B).